Here is a 463-residue protein sequence, read N- to C-terminus: ATP synthase subunit beta (463 aa).

152-159 (GGAGVGKT) lines the ATP pocket.

This sequence belongs to the ATPase alpha/beta chains family. As to quaternary structure, F-type ATPases have 2 components, CF(1) - the catalytic core - and CF(0) - the membrane proton channel. CF(1) has five subunits: alpha(3), beta(3), gamma(1), delta(1), epsilon(1). CF(0) has three main subunits: a(1), b(2) and c(9-12). The alpha and beta chains form an alternating ring which encloses part of the gamma chain. CF(1) is attached to CF(0) by a central stalk formed by the gamma and epsilon chains, while a peripheral stalk is formed by the delta and b chains.

The protein resides in the cell membrane. It catalyses the reaction ATP + H2O + 4 H(+)(in) = ADP + phosphate + 5 H(+)(out). In terms of biological role, produces ATP from ADP in the presence of a proton gradient across the membrane. The catalytic sites are hosted primarily by the beta subunits. The sequence is that of ATP synthase subunit beta from Clostridium botulinum (strain Eklund 17B / Type B).